The sequence spans 167 residues: Ribosome maturation factor RimM (167 aa).

A PRC barrel domain is found at 94 to 166 (DDRAWLHELE…YIHVPRFDEF (73 aa)).

Belongs to the RimM family. As to quaternary structure, binds ribosomal protein uS19.

The protein localises to the cytoplasm. Its function is as follows. An accessory protein needed during the final step in the assembly of 30S ribosomal subunit, possibly for assembly of the head region. Essential for efficient processing of 16S rRNA. May be needed both before and after RbfA during the maturation of 16S rRNA. It has affinity for free ribosomal 30S subunits but not for 70S ribosomes. This chain is Ribosome maturation factor RimM, found in Chlorobium luteolum (strain DSM 273 / BCRC 81028 / 2530) (Pelodictyon luteolum).